A 483-amino-acid polypeptide reads, in one-letter code: UDP-N-acetylmuramoyl-L-alanyl-D-glutamate--2,6-diaminopimelate ligase (483 aa).

Ser-30 contacts UDP-N-acetyl-alpha-D-muramoyl-L-alanyl-D-glutamate. Residue 109 to 115 (GTNGKTT) participates in ATP binding. Residues 151 to 152 (TT), Ser-178, and Arg-186 contribute to the UDP-N-acetyl-alpha-D-muramoyl-L-alanyl-D-glutamate site. An N6-carboxylysine modification is found at Lys-218. Residues Arg-380, 403 to 406 (DNPR), Gly-453, and Glu-457 each bind meso-2,6-diaminopimelate. A Meso-diaminopimelate recognition motif motif is present at residues 403 to 406 (DNPR).

Belongs to the MurCDEF family. MurE subfamily. The cofactor is Mg(2+). Post-translationally, carboxylation is probably crucial for Mg(2+) binding and, consequently, for the gamma-phosphate positioning of ATP.

It localises to the cytoplasm. It catalyses the reaction UDP-N-acetyl-alpha-D-muramoyl-L-alanyl-D-glutamate + meso-2,6-diaminopimelate + ATP = UDP-N-acetyl-alpha-D-muramoyl-L-alanyl-gamma-D-glutamyl-meso-2,6-diaminopimelate + ADP + phosphate + H(+). It functions in the pathway cell wall biogenesis; peptidoglycan biosynthesis. In terms of biological role, catalyzes the addition of meso-diaminopimelic acid to the nucleotide precursor UDP-N-acetylmuramoyl-L-alanyl-D-glutamate (UMAG) in the biosynthesis of bacterial cell-wall peptidoglycan. In Chlamydia abortus (strain DSM 27085 / S26/3) (Chlamydophila abortus), this protein is UDP-N-acetylmuramoyl-L-alanyl-D-glutamate--2,6-diaminopimelate ligase.